The chain runs to 705 residues: Elongation factor G (705 aa).

Residues 8-290 (HRYRNIGIMA…GVIHLLPSPA (283 aa)) form the tr-type G domain. Residues 17-24 (AHIDAGKT), 88-92 (DTPGH), and 142-145 (NKMD) each bind GTP.

Belongs to the TRAFAC class translation factor GTPase superfamily. Classic translation factor GTPase family. EF-G/EF-2 subfamily.

Its subcellular location is the cytoplasm. Its function is as follows. Catalyzes the GTP-dependent ribosomal translocation step during translation elongation. During this step, the ribosome changes from the pre-translocational (PRE) to the post-translocational (POST) state as the newly formed A-site-bound peptidyl-tRNA and P-site-bound deacylated tRNA move to the P and E sites, respectively. Catalyzes the coordinated movement of the two tRNA molecules, the mRNA and conformational changes in the ribosome. The polypeptide is Elongation factor G (Xylella fastidiosa (strain M12)).